The sequence spans 634 residues: Calcium up-regulated protein D (634 aa).

The disordered stretch occupies residues 1–23 (MINIEDISKSSNQSEEKQLKSTS). Ricin B-type lectin domains lie at 27-146 (KPKY…WTTF) and 117-250 (PGNG…WGIN).

This sequence belongs to the cup family.

It is found in the cytoplasm. It localises to the membrane. Functionally, may play an important role in stabilizing and/or regulating the cell membrane during Ca(2+) stress or certain stages of development. The polypeptide is Calcium up-regulated protein D (cupD) (Dictyostelium discoideum (Social amoeba)).